A 227-amino-acid chain; its full sequence is ATP synthase F(0) complex subunit a (227 aa).

Transmembrane regions (helical) follow at residues 14-34, 73-93, 98-118, 137-157, 179-199, and 203-223; these read FLGI…IPTP, LASL…PYIF, QLSL…LIGM, ALIP…PLAL, VFVL…LLLL, and LEVA…SLYL.

It belongs to the ATPase A chain family. In terms of assembly, component of the ATP synthase complex composed at least of ATP5F1A/subunit alpha, ATP5F1B/subunit beta, ATP5MC1/subunit c (homooctomer), MT-ATP6/subunit a, MT-ATP8/subunit 8, ATP5ME/subunit e, ATP5MF/subunit f, ATP5MG/subunit g, ATP5MK/subunit k, ATP5MJ/subunit j, ATP5F1C/subunit gamma, ATP5F1D/subunit delta, ATP5F1E/subunit epsilon, ATP5PF/subunit F6, ATP5PB/subunit b, ATP5PD/subunit d, ATP5PO/subunit OSCP. ATP synthase complex consists of a soluble F(1) head domain (subunits alpha(3) and beta(3)) - the catalytic core - and a membrane F(0) domain - the membrane proton channel (subunits c, a, 8, e, f, g, k and j). These two domains are linked by a central stalk (subunits gamma, delta, and epsilon) rotating inside the F1 region and a stationary peripheral stalk (subunits F6, b, d, and OSCP). Interacts with DNAJC30; interaction is direct.

It localises to the mitochondrion inner membrane. It carries out the reaction H(+)(in) = H(+)(out). Functionally, subunit a, of the mitochondrial membrane ATP synthase complex (F(1)F(0) ATP synthase or Complex V) that produces ATP from ADP in the presence of a proton gradient across the membrane which is generated by electron transport complexes of the respiratory chain. ATP synthase complex consist of a soluble F(1) head domain - the catalytic core - and a membrane F(1) domain - the membrane proton channel. These two domains are linked by a central stalk rotating inside the F(1) region and a stationary peripheral stalk. During catalysis, ATP synthesis in the catalytic domain of F(1) is coupled via a rotary mechanism of the central stalk subunits to proton translocation. With the subunit c (ATP5MC1), forms the proton-conducting channel in the F(0) domain, that contains two crucial half-channels (inlet and outlet) that facilitate proton movement from the mitochondrial intermembrane space (IMS) into the matrix. Protons are taken up via the inlet half-channel and released through the outlet half-channel, following a Grotthuss mechanism. The sequence is that of ATP synthase F(0) complex subunit a from Gadus morhua (Atlantic cod).